The following is a 431-amino-acid chain: Trigger factor (431 aa).

In terms of domain architecture, PPIase FKBP-type spans 160–245 (DDRVTIDFVG…VKKVEVMVLP (86 aa)).

Belongs to the FKBP-type PPIase family. Tig subfamily.

The protein localises to the cytoplasm. It carries out the reaction [protein]-peptidylproline (omega=180) = [protein]-peptidylproline (omega=0). Its function is as follows. Involved in protein export. Acts as a chaperone by maintaining the newly synthesized protein in an open conformation. Functions as a peptidyl-prolyl cis-trans isomerase. This Mannheimia succiniciproducens (strain KCTC 0769BP / MBEL55E) protein is Trigger factor.